A 488-amino-acid chain; its full sequence is Bifunctional protein GlmU (488 aa).

A pyrophosphorylase region spans residues 1 to 237; the sequence is MPRTRTPLAA…AEEASGVNDR (237 aa). UDP-N-acetyl-alpha-D-glucosamine-binding positions include 13 to 16, Lys-27, Gln-82, 87 to 88, 110 to 112, Gly-149, Glu-164, Asn-179, and Asn-235; these read LAAG, GT, and SGD. Asp-112 is a binding site for Mg(2+). Residue Asn-235 coordinates Mg(2+). Residues 238–258 are linker; the sequence is VELSRANRVMVGRLAEAFMRA. The segment at 259-488 is N-acetyltransferase; sequence GVTIEDPARF…KGRPAARRAS (230 aa). The UDP-N-acetyl-alpha-D-glucosamine site is built by Arg-341 and Lys-359. Residue His-371 is the Proton acceptor of the active site. Residues Tyr-374 and Asn-385 each contribute to the UDP-N-acetyl-alpha-D-glucosamine site. Acetyl-CoA-binding positions include Ala-388, 394 to 395, Ser-413, Ala-431, and Arg-448; that span reads NY. Residues 459 to 488 form a disordered region; the sequence is AQRQAEKQMKGTATGPASARKGRPAARRAS. Positions 478–488 are enriched in basic residues; it reads RKGRPAARRAS.

This sequence in the N-terminal section; belongs to the N-acetylglucosamine-1-phosphate uridyltransferase family. The protein in the C-terminal section; belongs to the transferase hexapeptide repeat family. In terms of assembly, homotrimer. Mg(2+) is required as a cofactor.

It is found in the cytoplasm. It catalyses the reaction alpha-D-glucosamine 1-phosphate + acetyl-CoA = N-acetyl-alpha-D-glucosamine 1-phosphate + CoA + H(+). It carries out the reaction N-acetyl-alpha-D-glucosamine 1-phosphate + UTP + H(+) = UDP-N-acetyl-alpha-D-glucosamine + diphosphate. Its pathway is nucleotide-sugar biosynthesis; UDP-N-acetyl-alpha-D-glucosamine biosynthesis; N-acetyl-alpha-D-glucosamine 1-phosphate from alpha-D-glucosamine 6-phosphate (route II): step 2/2. It participates in nucleotide-sugar biosynthesis; UDP-N-acetyl-alpha-D-glucosamine biosynthesis; UDP-N-acetyl-alpha-D-glucosamine from N-acetyl-alpha-D-glucosamine 1-phosphate: step 1/1. It functions in the pathway bacterial outer membrane biogenesis; LPS lipid A biosynthesis. In terms of biological role, catalyzes the last two sequential reactions in the de novo biosynthetic pathway for UDP-N-acetylglucosamine (UDP-GlcNAc). The C-terminal domain catalyzes the transfer of acetyl group from acetyl coenzyme A to glucosamine-1-phosphate (GlcN-1-P) to produce N-acetylglucosamine-1-phosphate (GlcNAc-1-P), which is converted into UDP-GlcNAc by the transfer of uridine 5-monophosphate (from uridine 5-triphosphate), a reaction catalyzed by the N-terminal domain. This is Bifunctional protein GlmU from Anaeromyxobacter dehalogenans (strain 2CP-1 / ATCC BAA-258).